A 358-amino-acid polypeptide reads, in one-letter code: Methionine aminopeptidase 2 (358 aa).

His109 provides a ligand contact to substrate. Asp130, Asp141, and His210 together coordinate a divalent metal cation. Substrate is bound at residue His218. Residues Glu243 and Glu339 each coordinate a divalent metal cation.

The protein belongs to the peptidase M24A family. Methionine aminopeptidase eukaryotic type 2 subfamily. It depends on Co(2+) as a cofactor. Zn(2+) serves as cofactor. Mn(2+) is required as a cofactor. The cofactor is Fe(2+).

Its subcellular location is the cytoplasm. It catalyses the reaction Release of N-terminal amino acids, preferentially methionine, from peptides and arylamides.. With respect to regulation, irreversibly inhibited by the fungal metabolite fumagillin and the fumagillin analog TNP470, antiangiogenic drugs. In terms of biological role, cotranslationally removes the N-terminal methionine from nascent proteins. The N-terminal methionine is often cleaved when the second residue in the primary sequence is small and uncharged (Met-Ala-, Cys, Gly, Pro, Ser, Thr, or Val). This is Methionine aminopeptidase 2 from Encephalitozoon hellem (strain ATCC 50504) (Microsporidian parasite).